We begin with the raw amino-acid sequence, 634 residues long: DNA-directed RNA polymerase subunit gamma (634 aa).

Cys74, Cys76, Cys89, and Cys92 together coordinate Zn(2+). Mg(2+) contacts are provided by Asp471, Asp473, and Asp475.

Belongs to the RNA polymerase beta' chain family. RpoC1 subfamily. In terms of assembly, in cyanobacteria the RNAP catalytic core is composed of 2 alpha, 1 beta, 1 beta', 1 gamma and 1 omega subunit. When a sigma factor is associated with the core the holoenzyme is formed, which can initiate transcription. Mg(2+) is required as a cofactor. It depends on Zn(2+) as a cofactor.

The enzyme catalyses RNA(n) + a ribonucleoside 5'-triphosphate = RNA(n+1) + diphosphate. Functionally, DNA-dependent RNA polymerase catalyzes the transcription of DNA into RNA using the four ribonucleoside triphosphates as substrates. This Prochlorococcus marinus (strain MIT 9215) protein is DNA-directed RNA polymerase subunit gamma.